A 156-amino-acid polypeptide reads, in one-letter code: ATP synthase subunit b (156 aa).

Residues 7-27 (LIGQTIAFIVFVWFCMKFVWP) traverse the membrane as a helical segment.

The protein belongs to the ATPase B chain family. As to quaternary structure, F-type ATPases have 2 components, F(1) - the catalytic core - and F(0) - the membrane proton channel. F(1) has five subunits: alpha(3), beta(3), gamma(1), delta(1), epsilon(1). F(0) has three main subunits: a(1), b(2) and c(10-14). The alpha and beta chains form an alternating ring which encloses part of the gamma chain. F(1) is attached to F(0) by a central stalk formed by the gamma and epsilon chains, while a peripheral stalk is formed by the delta and b chains.

It is found in the cell inner membrane. In terms of biological role, f(1)F(0) ATP synthase produces ATP from ADP in the presence of a proton or sodium gradient. F-type ATPases consist of two structural domains, F(1) containing the extramembraneous catalytic core and F(0) containing the membrane proton channel, linked together by a central stalk and a peripheral stalk. During catalysis, ATP synthesis in the catalytic domain of F(1) is coupled via a rotary mechanism of the central stalk subunits to proton translocation. Functionally, component of the F(0) channel, it forms part of the peripheral stalk, linking F(1) to F(0). The protein is ATP synthase subunit b of Idiomarina loihiensis (strain ATCC BAA-735 / DSM 15497 / L2-TR).